Here is a 392-residue protein sequence, read N- to C-terminus: Cobalt-precorrin-5B C(1)-methyltransferase (392 aa).

The protein belongs to the CbiD family.

The enzyme catalyses Co-precorrin-5B + S-adenosyl-L-methionine = Co-precorrin-6A + S-adenosyl-L-homocysteine. The protein operates within cofactor biosynthesis; adenosylcobalamin biosynthesis; cob(II)yrinate a,c-diamide from sirohydrochlorin (anaerobic route): step 6/10. Functionally, catalyzes the methylation of C-1 in cobalt-precorrin-5B to form cobalt-precorrin-6A. This is Cobalt-precorrin-5B C(1)-methyltransferase from Pelobacter propionicus (strain DSM 2379 / NBRC 103807 / OttBd1).